Reading from the N-terminus, the 125-residue chain is Small ribosomal subunit protein uS12 (125 aa).

3-methylthioaspartic acid is present on aspartate 89.

It belongs to the universal ribosomal protein uS12 family. In terms of assembly, part of the 30S ribosomal subunit. Contacts proteins S8 and S17. May interact with IF1 in the 30S initiation complex.

Its function is as follows. With S4 and S5 plays an important role in translational accuracy. In terms of biological role, interacts with and stabilizes bases of the 16S rRNA that are involved in tRNA selection in the A site and with the mRNA backbone. Located at the interface of the 30S and 50S subunits, it traverses the body of the 30S subunit contacting proteins on the other side and probably holding the rRNA structure together. The combined cluster of proteins S8, S12 and S17 appears to hold together the shoulder and platform of the 30S subunit. The chain is Small ribosomal subunit protein uS12 from Acidovorax sp. (strain JS42).